Here is a 505-residue protein sequence, read N- to C-terminus: AAA-ATPase At5g17760 (505 aa).

The helical transmembrane segment at 11–27 (TSVFTAYASMAGYMMMI) threads the bilayer. The tract at residues 136–155 (GGGGGVGGRGGGGGRRGGMD) is disordered. A compositionally biased stretch (gly residues) spans 137-151 (GGGGVGGRGGGGGRR). 260–267 (GPPGTGKS) is a binding site for ATP.

This sequence belongs to the AAA ATPase family. BCS1 subfamily. It depends on Mg(2+) as a cofactor.

It localises to the membrane. The catalysed reaction is ATP + H2O = ADP + phosphate + H(+). In Arabidopsis thaliana (Mouse-ear cress), this protein is AAA-ATPase At5g17760.